The sequence spans 229 residues: Urease accessory protein UreF (229 aa).

It belongs to the UreF family. UreD, UreF and UreG form a complex that acts as a GTP-hydrolysis-dependent molecular chaperone, activating the urease apoprotein by helping to assemble the nickel containing metallocenter of UreC. The UreE protein probably delivers the nickel.

Its subcellular location is the cytoplasm. In terms of biological role, required for maturation of urease via the functional incorporation of the urease nickel metallocenter. The protein is Urease accessory protein UreF of Alcanivorax borkumensis (strain ATCC 700651 / DSM 11573 / NCIMB 13689 / SK2).